We begin with the raw amino-acid sequence, 716 residues long: tRNA(Met) cytidine acetyltransferase TmcA (716 aa).

ATP is bound by residues Gln192, 217–226 (GRGKSYVIGL), and Arg364. The N-acetyltransferase domain occupies 401 to 567 (REVLARDREV…KNVALAKPLD (167 aa)). Residues 493 to 495 (IAV) and 500 to 506 (QRRGLGS) each bind acetyl-CoA.

The protein belongs to the RNA cytidine acetyltransferase family. TmcA subfamily.

It is found in the cytoplasm. The enzyme catalyses cytidine(34) in elongator tRNA(Met) + acetyl-CoA + ATP + H2O = N(4)-acetylcytidine(34) in elongator tRNA(Met) + ADP + phosphate + CoA + H(+). Catalyzes the formation of N(4)-acetylcytidine (ac(4)C) at the wobble position of tRNA(Met), by using acetyl-CoA as an acetyl donor and ATP (or GTP). In Aeropyrum pernix (strain ATCC 700893 / DSM 11879 / JCM 9820 / NBRC 100138 / K1), this protein is tRNA(Met) cytidine acetyltransferase TmcA.